Here is a 51-residue protein sequence, read N- to C-terminus: Large ribosomal subunit protein eL39 (51 aa).

The segment covering 1–15 (MPSHKSFRTKQKLAK) has biased composition (basic residues). The disordered stretch occupies residues 1 to 21 (MPSHKSFRTKQKLAKAARQNR).

The protein belongs to the eukaryotic ribosomal protein eL39 family. As to quaternary structure, component of the large ribosomal subunit (LSU). Mature yeast ribosomes consist of a small (40S) and a large (60S) subunit. The 40S small subunit contains 1 molecule of ribosomal RNA (18S rRNA) and at least 33 different proteins. The large 60S subunit contains 3 rRNA molecules (25S, 5.8S and 5S rRNA) and at least 46 different proteins. eL39 interacts with yih1.

It is found in the cytoplasm. In terms of biological role, component of the ribosome, a large ribonucleoprotein complex responsible for the synthesis of proteins in the cell. The small ribosomal subunit (SSU) binds messenger RNAs (mRNAs) and translates the encoded message by selecting cognate aminoacyl-transfer RNA (tRNA) molecules. The large subunit (LSU) contains the ribosomal catalytic site termed the peptidyl transferase center (PTC), which catalyzes the formation of peptide bonds, thereby polymerizing the amino acids delivered by tRNAs into a polypeptide chain. The nascent polypeptides leave the ribosome through a tunnel in the LSU and interact with protein factors that function in enzymatic processing, targeting, and the membrane insertion of nascent chains at the exit of the ribosomal tunnel. The protein is Large ribosomal subunit protein eL39 (rpl39) of Schizosaccharomyces pombe (strain 972 / ATCC 24843) (Fission yeast).